The primary structure comprises 347 residues: Holliday junction branch migration complex subunit RuvB (347 aa).

The tract at residues 1 to 186 (MKDENSINFL…FGITARFELY (186 aa)) is large ATPase domain (RuvB-L). Residues Leu25, Arg26, Gly67, Lys70, Thr71, Thr72, 133–135 (EDY), Arg176, Tyr186, and Arg223 each bind ATP. Residue Thr71 participates in Mg(2+) binding. Residues 187 to 257 (SEIELVEIIK…IVSIGLEMLR (71 aa)) form a small ATPAse domain (RuvB-S) region. Residues 260–347 (GEGLDEQDRN…DISENQRVSF (88 aa)) form a head domain (RuvB-H) region. Positions 315 and 320 each coordinate DNA.

The protein belongs to the RuvB family. In terms of assembly, homohexamer. Forms an RuvA(8)-RuvB(12)-Holliday junction (HJ) complex. HJ DNA is sandwiched between 2 RuvA tetramers; dsDNA enters through RuvA and exits via RuvB. An RuvB hexamer assembles on each DNA strand where it exits the tetramer. Each RuvB hexamer is contacted by two RuvA subunits (via domain III) on 2 adjacent RuvB subunits; this complex drives branch migration. In the full resolvosome a probable DNA-RuvA(4)-RuvB(12)-RuvC(2) complex forms which resolves the HJ.

It localises to the cytoplasm. The catalysed reaction is ATP + H2O = ADP + phosphate + H(+). In terms of biological role, the RuvA-RuvB-RuvC complex processes Holliday junction (HJ) DNA during genetic recombination and DNA repair, while the RuvA-RuvB complex plays an important role in the rescue of blocked DNA replication forks via replication fork reversal (RFR). RuvA specifically binds to HJ cruciform DNA, conferring on it an open structure. The RuvB hexamer acts as an ATP-dependent pump, pulling dsDNA into and through the RuvAB complex. RuvB forms 2 homohexamers on either side of HJ DNA bound by 1 or 2 RuvA tetramers; 4 subunits per hexamer contact DNA at a time. Coordinated motions by a converter formed by DNA-disengaged RuvB subunits stimulates ATP hydrolysis and nucleotide exchange. Immobilization of the converter enables RuvB to convert the ATP-contained energy into a lever motion, pulling 2 nucleotides of DNA out of the RuvA tetramer per ATP hydrolyzed, thus driving DNA branch migration. The RuvB motors rotate together with the DNA substrate, which together with the progressing nucleotide cycle form the mechanistic basis for DNA recombination by continuous HJ branch migration. Branch migration allows RuvC to scan DNA until it finds its consensus sequence, where it cleaves and resolves cruciform DNA. The polypeptide is Holliday junction branch migration complex subunit RuvB (Borrelia garinii subsp. bavariensis (strain ATCC BAA-2496 / DSM 23469 / PBi) (Borreliella bavariensis)).